Reading from the N-terminus, the 407-residue chain is MSDLQKSFAKSKLAKLPPEPPPIPESVADEDDDSGSSTETVTPSPVKQLFARPGGTRGFFDQELYLQRRVNDLDIVHHVYLTSPTNSGPLFVMHHGAGSSGLSFANCAAEIRKILPNAGILSADARDHGSTSVKRASEDGEADPETARLDLSLDTLNQDLLFVIRETQAKMGWETLPDIVLVGHSLGGAVITDVAKKGELGGKLLAYAVLDVVEGSAMDALQSMETYLSTRPSRFPSLPSGIEWHTRSRTIRNRTSARVSVPSLLYHEDVPKDPSKPWVWRTNLAETKPFWEGWFVGLSRKFLEARGGKLLLLAGTDRLDKELMIGQMQGKYQLQVFPDAGHFIQEDQPARTAQILVDFYKRNDRSALVLPPKVADMQASAAMKKGAGAGVPLGKAEGGTTGSFKRS.

The tract at residues 1-53 (MSDLQKSFAKSKLAKLPPEPPPIPESVADEDDDSGSSTETVTPSPVKQLFARP) is disordered. Active-site residues include serine 185, aspartate 211, and histidine 342. Residues 388–401 (GAGVPLGKAEGGTT) show a composition bias toward gly residues. The tract at residues 388 to 407 (GAGVPLGKAEGGTTGSFKRS) is disordered.

Belongs to the AB hydrolase superfamily.

The enzyme catalyses [phosphatase 2A protein]-C-terminal L-leucine methyl ester + H2O = [phosphatase 2A protein]-C-terminal L-leucine + methanol + H(+). Its function is as follows. Demethylates proteins that have been reversibly carboxymethylated. Demethylates the phosphatase PP2A catalytic subunit. The sequence is that of Protein phosphatase methylesterase 1 (ppe1) from Emericella nidulans (strain FGSC A4 / ATCC 38163 / CBS 112.46 / NRRL 194 / M139) (Aspergillus nidulans).